The sequence spans 1193 residues: DNA-directed RNA polymerase subunit beta (1193 aa).

Over residues 1149-1162 (EEEIEMRDLEDEED) the composition is skewed to acidic residues. The segment at 1149–1193 (EEEIEMRDLEDEEDAKQADGLALSGDEEPEETASADVERDVVTKE) is disordered. Residues 1184 to 1193 (DVERDVVTKE) show a composition bias toward basic and acidic residues.

The protein belongs to the RNA polymerase beta chain family. RNAP is composed of a core of 2 alpha, a beta and a beta' subunit. The core is associated with a delta subunit, and at least one of epsilon or omega. When a sigma factor is associated with the core the holoenzyme is formed, which can initiate transcription.

It catalyses the reaction RNA(n) + a ribonucleoside 5'-triphosphate = RNA(n+1) + diphosphate. Its function is as follows. DNA-dependent RNA polymerase catalyzes the transcription of DNA into RNA using the four ribonucleoside triphosphates as substrates. This chain is DNA-directed RNA polymerase subunit beta, found in Bacillus subtilis (strain 168).